A 147-amino-acid chain; its full sequence is Hemoglobin subunit beta (147 aa).

The residue at position 2 (V2) is an N-acetylvaline. In terms of domain architecture, Globin spans 3–147; the sequence is HLADDEKAAV…VSTALAHKYH (145 aa). S45 carries the post-translational modification Phosphoserine. K60 carries the N6-acetyllysine modification. H64 is a heme b binding site. K83 carries the N6-acetyllysine modification. Heme b is bound at residue H93. C94 is modified (S-nitrosocysteine). K145 carries the post-translational modification N6-acetyllysine.

Belongs to the globin family. As to quaternary structure, heterotetramer of two alpha chains and two beta chains. Red blood cells.

Functionally, involved in oxygen transport from the lung to the various peripheral tissues. This Bradypus tridactylus (Pale-throated three-toed sloth) protein is Hemoglobin subunit beta (HBB).